The following is a 776-amino-acid chain: 1,4-alpha-glucan branching enzyme GlgB (776 aa).

The active-site Nucleophile is aspartate 431. The Proton donor role is filled by glutamate 484.

It belongs to the glycosyl hydrolase 13 family. GlgB subfamily. As to quaternary structure, monomer.

It carries out the reaction Transfers a segment of a (1-&gt;4)-alpha-D-glucan chain to a primary hydroxy group in a similar glucan chain.. The protein operates within glycan biosynthesis; glycogen biosynthesis. Functionally, catalyzes the formation of the alpha-1,6-glucosidic linkages in glycogen by scission of a 1,4-alpha-linked oligosaccharide from growing alpha-1,4-glucan chains and the subsequent attachment of the oligosaccharide to the alpha-1,6 position. The chain is 1,4-alpha-glucan branching enzyme GlgB from Trichodesmium erythraeum (strain IMS101).